Consider the following 93-residue polypeptide: Ubiquinol-cytochrome-c reductase complex assembly factor 3 (93 aa).

At 1–7 (MDSLRKM) the chain is on the mitochondrial matrix side. Residues 8-28 (LISVAMLGAGAGVGYALLVIV) form a helical membrane-spanning segment. Positions 23–80 (ALLVIVTPGERRKQEMLKEMPLQDPRSREEAARTQQLLLATLQEAATTQENVAWRKNW) are mediates lipid-binding. The Mitochondrial intermembrane portion of the chain corresponds to 29 to 93 (TPGERRKQEM…GEGGAGGRSP (65 aa)).

Belongs to the UQCC3 family. In terms of assembly, associates with the ubiquinol-cytochrome c reductase complex (mitochondrial respiratory chain complex III or cytochrome b-c1 complex). Interacts with UQCC1. Forms a complex, named COMC, composed of UQCC1, UQCC2; UQCC3 and UQCC4; mediates MT-CYB hemylation and association with the first nuclear-encoded complex III subunit UQCRQ. In terms of processing, probably cleaved by OMA1 under mitochondrial stress conditions.

It is found in the mitochondrion inner membrane. In terms of biological role, required for the assembly of the ubiquinol-cytochrome c reductase complex (mitochondrial respiratory chain complex III or cytochrome b-c1 complex), mediating cytochrome b recruitment and probably stabilization within the complex. Thereby, plays an important role in ATP production by mitochondria. Cardiolipin-binding protein, it may also control the cardiolipin composition of mitochondria membranes and their morphology. The protein is Ubiquinol-cytochrome-c reductase complex assembly factor 3 of Homo sapiens (Human).